Here is a 386-residue protein sequence, read N- to C-terminus: 2-isopropylmalate synthase (386 aa).

The region spanning 15 to 269 (IRIFDTTLRD…ETNVKTWKLY (255 aa)) is the Pyruvate carboxyltransferase domain. A divalent metal cation-binding residues include D24, H207, H209, and N243.

This sequence belongs to the alpha-IPM synthase/homocitrate synthase family. As to quaternary structure, homodimer. The cofactor is a divalent metal cation.

It catalyses the reaction 3-methyl-2-oxobutanoate + acetyl-CoA + H2O = (2S)-2-isopropylmalate + CoA + H(+). The protein operates within amino-acid biosynthesis; L-leucine biosynthesis; L-leucine from 3-methyl-2-oxobutanoate: step 1/4. In terms of biological role, catalyzes the condensation of the acetyl group of acetyl-CoA with 3-methyl-2-oxobutanoate (2-oxoisovalerate) to form 3-carboxy-3-hydroxy-4-methylpentanoate (2-isopropylmalate). Carries out the first step of the leucine biosynthesis pathway. The polypeptide is 2-isopropylmalate synthase (leuA) (Saccharolobus solfataricus (strain ATCC 35092 / DSM 1617 / JCM 11322 / P2) (Sulfolobus solfataricus)).